A 259-amino-acid chain; its full sequence is UPF0246 protein PputGB1_4560 (259 aa).

The protein belongs to the UPF0246 family.

The sequence is that of UPF0246 protein PputGB1_4560 from Pseudomonas putida (strain GB-1).